Consider the following 334-residue polypeptide: Glyceraldehyde-3-phosphate dehydrogenase (334 aa).

NAD(+)-binding positions include 12–13 (TI) and Gly-111. 140-142 (SCN) lines the D-glyceraldehyde 3-phosphate pocket. The active-site Nucleophile is Cys-141. Arg-167 is a binding site for NAD(+). 192–193 (HG) serves as a coordination point for D-glyceraldehyde 3-phosphate. Residue Gln-298 coordinates NAD(+).

The protein belongs to the glyceraldehyde-3-phosphate dehydrogenase family. In terms of assembly, homotetramer.

Its subcellular location is the cytoplasm. It catalyses the reaction D-glyceraldehyde 3-phosphate + phosphate + NADP(+) = (2R)-3-phospho-glyceroyl phosphate + NADPH + H(+). The catalysed reaction is D-glyceraldehyde 3-phosphate + phosphate + NAD(+) = (2R)-3-phospho-glyceroyl phosphate + NADH + H(+). Its pathway is carbohydrate degradation; glycolysis; pyruvate from D-glyceraldehyde 3-phosphate: step 1/5. This chain is Glyceraldehyde-3-phosphate dehydrogenase, found in Thermococcus onnurineus (strain NA1).